We begin with the raw amino-acid sequence, 314 residues long: MFIRPPAVFLMGPTASGKTELALALAERLSCEIISVDSAQVYCGMDIGTAKPSLALRHRYPHHLIDILDPAETYSAGRFRADALTLMKAISKRGRIPLLVGGTMLYFHALTYGISPLPPADPEVRAAIDREANMKGWKALHRRLAELDPMAAQRIHHHDPQRIQRALEVFQLTGRPLSELIANSRESELPYRVIKLILAPAERIVLHSRIERRFRAMLKAGFLEEVKGLFMRPDLSLGHSSIRAVGYRQAWLYLQDQFSFPTMAEQAISATRQMAKRQLTWLRRESNAIHVDPEEKDHVEQAWRQLEMALVQAS.

Residue 12–19 (GPTASGKT) participates in ATP binding. Substrate is bound at residue 14 to 19 (TASGKT). Interaction with substrate tRNA regions lie at residues 37–40 (DSAQ) and 161–165 (QRIQR).

The protein belongs to the IPP transferase family. Monomer. Requires Mg(2+) as cofactor.

The catalysed reaction is adenosine(37) in tRNA + dimethylallyl diphosphate = N(6)-dimethylallyladenosine(37) in tRNA + diphosphate. In terms of biological role, catalyzes the transfer of a dimethylallyl group onto the adenine at position 37 in tRNAs that read codons beginning with uridine, leading to the formation of N6-(dimethylallyl)adenosine (i(6)A). In Nitrosococcus oceani (strain ATCC 19707 / BCRC 17464 / JCM 30415 / NCIMB 11848 / C-107), this protein is tRNA dimethylallyltransferase.